Consider the following 319-residue polypeptide: ATP-dependent 6-phosphofructokinase (319 aa).

Glycine 11 provides a ligand contact to ATP. Residue 21–25 (RAVVR) coordinates ADP. ATP is bound by residues 72–73 (RC) and 102–105 (GDGS). Aspartate 103 contributes to the Mg(2+) binding site. 125–127 (TID) contacts substrate. Catalysis depends on aspartate 127, which acts as the Proton acceptor. Arginine 154 contributes to the ADP binding site. Residues arginine 162 and 169–171 (MGR) contribute to the substrate site. Residues 185–187 (GAE), arginine 211, and 213–215 (KKH) contribute to the ADP site. Substrate contacts are provided by residues glutamate 222, arginine 243, and 249–252 (HVQR).

This sequence belongs to the phosphofructokinase type A (PFKA) family. ATP-dependent PFK group I subfamily. Prokaryotic clade 'B1' sub-subfamily. Homotetramer. Requires Mg(2+) as cofactor.

The protein resides in the cytoplasm. It catalyses the reaction beta-D-fructose 6-phosphate + ATP = beta-D-fructose 1,6-bisphosphate + ADP + H(+). The protein operates within carbohydrate degradation; glycolysis; D-glyceraldehyde 3-phosphate and glycerone phosphate from D-glucose: step 3/4. Its activity is regulated as follows. Allosterically activated by ADP and other diphosphonucleosides, and allosterically inhibited by phosphoenolpyruvate. In terms of biological role, catalyzes the phosphorylation of D-fructose 6-phosphate to fructose 1,6-bisphosphate by ATP, the first committing step of glycolysis. In Bacillus cereus (strain B4264), this protein is ATP-dependent 6-phosphofructokinase.